We begin with the raw amino-acid sequence, 218 residues long: Ribose-5-phosphate isomerase A (218 aa).

Substrate contacts are provided by residues 28 to 31 (TGST), 81 to 84 (DGAD), and 94 to 97 (KGGG). The active-site Proton acceptor is Glu103. Substrate is bound at residue Lys121.

It belongs to the ribose 5-phosphate isomerase family. Homodimer.

The catalysed reaction is aldehydo-D-ribose 5-phosphate = D-ribulose 5-phosphate. The protein operates within carbohydrate degradation; pentose phosphate pathway; D-ribose 5-phosphate from D-ribulose 5-phosphate (non-oxidative stage): step 1/1. Its function is as follows. Catalyzes the reversible conversion of ribose-5-phosphate to ribulose 5-phosphate. This chain is Ribose-5-phosphate isomerase A, found in Vibrio vulnificus (strain CMCP6).